The sequence spans 163 residues: RNA pyrophosphohydrolase (163 aa).

The Nudix hydrolase domain maps to 6-149; that stretch reads GYRLNVGIVI…KRDVYRQVMK (144 aa). A Nudix box motif is present at residues 38–59; that stretch reads GGIHLTESPEEAMYRELFEELG.

This sequence belongs to the Nudix hydrolase family. RppH subfamily. A divalent metal cation is required as a cofactor.

Functionally, accelerates the degradation of transcripts by removing pyrophosphate from the 5'-end of triphosphorylated RNA, leading to a more labile monophosphorylated state that can stimulate subsequent ribonuclease cleavage. The protein is RNA pyrophosphohydrolase of Hamiltonella defensa subsp. Acyrthosiphon pisum (strain 5AT).